A 60-amino-acid chain; its full sequence is Transcriptional regulator Brz (60 aa).

A C4-type; atypical zinc finger spans residues Cys8–His52.

The protein belongs to the Brz family.

Functionally, activates transcription of bacteriorhodopsin (bop) and phytoene synthase (crtB1). May interact with DNA or RNA via the zinc finger motif. The polypeptide is Transcriptional regulator Brz (brz) (Halobacterium salinarum (strain ATCC 29341 / DSM 671 / R1)).